A 220-amino-acid polypeptide reads, in one-letter code: Large ribosomal subunit protein bL25 (220 aa).

It belongs to the bacterial ribosomal protein bL25 family. CTC subfamily. Part of the 50S ribosomal subunit; part of the 5S rRNA/L5/L18/L25 subcomplex. Contacts the 5S rRNA. Binds to the 5S rRNA independently of L5 and L18.

This is one of the proteins that binds to the 5S RNA in the ribosome where it forms part of the central protuberance. The chain is Large ribosomal subunit protein bL25 from Zymomonas mobilis subsp. mobilis (strain ATCC 31821 / ZM4 / CP4).